Reading from the N-terminus, the 1387-residue chain is DNA-directed RNA polymerase subunit beta'' (1387 aa).

Positions 220, 291, 298, and 301 each coordinate Zn(2+).

This sequence belongs to the RNA polymerase beta' chain family. RpoC2 subfamily. As to quaternary structure, in plastids the minimal PEP RNA polymerase catalytic core is composed of four subunits: alpha, beta, beta', and beta''. When a (nuclear-encoded) sigma factor is associated with the core the holoenzyme is formed, which can initiate transcription. It depends on Zn(2+) as a cofactor.

It localises to the plastid. The protein localises to the chloroplast. It catalyses the reaction RNA(n) + a ribonucleoside 5'-triphosphate = RNA(n+1) + diphosphate. Its function is as follows. DNA-dependent RNA polymerase catalyzes the transcription of DNA into RNA using the four ribonucleoside triphosphates as substrates. The protein is DNA-directed RNA polymerase subunit beta'' of Carica papaya (Papaya).